The following is a 314-amino-acid chain: Homoserine kinase (314 aa).

ATP is bound at residue 95-105 (PHSRGLGSSAA).

The protein belongs to the GHMP kinase family. Homoserine kinase subfamily.

Its subcellular location is the cytoplasm. The catalysed reaction is L-homoserine + ATP = O-phospho-L-homoserine + ADP + H(+). The protein operates within amino-acid biosynthesis; L-threonine biosynthesis; L-threonine from L-aspartate: step 4/5. Functionally, catalyzes the ATP-dependent phosphorylation of L-homoserine to L-homoserine phosphate. The polypeptide is Homoserine kinase (Mycolicibacterium vanbaalenii (strain DSM 7251 / JCM 13017 / BCRC 16820 / KCTC 9966 / NRRL B-24157 / PYR-1) (Mycobacterium vanbaalenii)).